We begin with the raw amino-acid sequence, 663 residues long: MIDKRDDKPFKLKSKYKPSGDQPQAIESLVDNIEGGEKAQILLGATGTGKTYTMSQVISKVNKPTLVIAHNKTLAGQLYGEFKEFFPDNAVEYFVSYYDYYQPEAYVPSSDTYIEKDSSVNDEIDKLRHSATSSLLERNDVIVVASVSCIYGLGSPKEYADSAVSLRPGQEISRDTLLNQLVDIQFERNDIDFQRGCFRVRGDVVEVFPASRDEHAFRVEFFGDEIDRICEIESLTGKTIGEVDHLVLFPATHFVTNDEHMEQSIAKIQAELAEQLQLFESEGKLLEAQRLRQRTEYDIEMLREMGYTSGVENYSRHMDGRSPGEPPYTLLDFFPEDFLIMIDESHMTMGQIKGMYNGDQARKQMLVDYGFRLPSALDNRPLRREEFESHVHQIVYVSATPGEYEMSQTNTIIEQIIRPTGLLDPEIDVRPSMGQMDDLLGEINQRVARDERTFITTLTKKMAEDLTDYLKEMGVKVKYMHSDIKTLERTEIIRDLRLGVFDVLIGINLLREGIDVPEVSLVAILDADKEGFLRNERGLIQTIGRAARNVDGHVIMYADKMTDSMQRAIDETARRREIQIAYNKAHGIVPQTIKKDIRGLISISKTSHNDISKEEMDYESMSRGERKEAINALQKQMQEAAELLDFELAAQMRDLILELKLMD.

A compositionally biased stretch (basic and acidic residues) spans 1-10; the sequence is MIDKRDDKPF. Residues 1–23 are disordered; it reads MIDKRDDKPFKLKSKYKPSGDQP. One can recognise a Helicase ATP-binding domain in the interval 31–418; that stretch reads DNIEGGEKAQ…TNTIIEQIIR (388 aa). 44-51 serves as a coordination point for ATP; it reads GATGTGKT. Residues 97-120 carry the Beta-hairpin motif; it reads YYDYYQPEAYVPSSDTYIEKDSSV. The region spanning 435–601 is the Helicase C-terminal domain; the sequence is QMDDLLGEIN…TIKKDIRGLI (167 aa). The UVR domain occupies 627–662; that stretch reads KEAINALQKQMQEAAELLDFELAAQMRDLILELKLM.

It belongs to the UvrB family. Forms a heterotetramer with UvrA during the search for lesions. Interacts with UvrC in an incision complex.

It localises to the cytoplasm. Its function is as follows. The UvrABC repair system catalyzes the recognition and processing of DNA lesions. A damage recognition complex composed of 2 UvrA and 2 UvrB subunits scans DNA for abnormalities. Upon binding of the UvrA(2)B(2) complex to a putative damaged site, the DNA wraps around one UvrB monomer. DNA wrap is dependent on ATP binding by UvrB and probably causes local melting of the DNA helix, facilitating insertion of UvrB beta-hairpin between the DNA strands. Then UvrB probes one DNA strand for the presence of a lesion. If a lesion is found the UvrA subunits dissociate and the UvrB-DNA preincision complex is formed. This complex is subsequently bound by UvrC and the second UvrB is released. If no lesion is found, the DNA wraps around the other UvrB subunit that will check the other stand for damage. The polypeptide is UvrABC system protein B (Streptococcus pyogenes serotype M3 (strain ATCC BAA-595 / MGAS315)).